Consider the following 22-residue polypeptide: Phenol-soluble modulin alpha 3 peptide (22 aa).

It belongs to the phenol-soluble modulin alpha peptides family.

Peptide which can recruit, activate and subsequently lyse human neutrophils, thus eliminating the main cellular defense against infection. This chain is Phenol-soluble modulin alpha 3 peptide (psmA3), found in Staphylococcus aureus (strain Mu3 / ATCC 700698).